A 251-amino-acid chain; its full sequence is 5'-nucleotidase SurE (251 aa).

A divalent metal cation contacts are provided by D8, D9, S39, and N91.

Belongs to the SurE nucleotidase family. The cofactor is a divalent metal cation.

It is found in the cytoplasm. The enzyme catalyses a ribonucleoside 5'-phosphate + H2O = a ribonucleoside + phosphate. Nucleotidase that shows phosphatase activity on nucleoside 5'-monophosphates. This is 5'-nucleotidase SurE from Methylococcus capsulatus (strain ATCC 33009 / NCIMB 11132 / Bath).